We begin with the raw amino-acid sequence, 80 residues long: U4-theraphotoxin-Spl1a (80 aa).

The N-terminal stretch at 1-21 (MKASLFAVIFGLVVLCACSFA) is a signal peptide. The propeptide occupies 22 to 50 (EDQFASPNELLKSMFVESTHELTPEVEGR). Intrachain disulfides connect Cys-52-Cys-66, Cys-59-Cys-71, and Cys-65-Cys-75. Leu-79 carries the leucine amide modification.

Belongs to the neurotoxin 30 (phrixotoxin) family. As to expression, expressed by the venom gland.

Its subcellular location is the secreted. Its function is as follows. Probable ion channel inhibitor. Shows insecticidal activity when injected into mealworms. This chain is U4-theraphotoxin-Spl1a, found in Selenotypus plumipes (Australian featherleg tarantula).